A 210-amino-acid chain; its full sequence is Ribosomal RNA large subunit methyltransferase E (210 aa).

Gly61, Trp63, Asp81, Asp97, and Asp122 together coordinate S-adenosyl-L-methionine. Residue Lys162 is the Proton acceptor of the active site.

The protein belongs to the class I-like SAM-binding methyltransferase superfamily. RNA methyltransferase RlmE family.

Its subcellular location is the cytoplasm. The catalysed reaction is uridine(2552) in 23S rRNA + S-adenosyl-L-methionine = 2'-O-methyluridine(2552) in 23S rRNA + S-adenosyl-L-homocysteine + H(+). Functionally, specifically methylates the uridine in position 2552 of 23S rRNA at the 2'-O position of the ribose in the fully assembled 50S ribosomal subunit. The protein is Ribosomal RNA large subunit methyltransferase E of Xanthomonas campestris pv. campestris (strain 8004).